The following is a 471-amino-acid chain: MGDSRDSRSPDSSSVSSPPSGQRSPPLAPSAAAMTSLPPITSAVNSPISSMGSPFSVISSSLGSPCLPGTPSVGYGPISSPQINSTVSMSGLHAVSSSDDVKPPFGLKPLSSHSPGPMVSQKRLCAICGDRSSGKHYGVYSCEGCKGFFKRTVRKDLSYTCRDNKDCLVDKRQRNRCQYCRYQKCLAMGMKREVVQDERQRSVQEERQRNKERDGEVESSSAANEEMPVEKILEAEMAVEQKTELHADGSSGGSSPNDPVTNICQAADKQLFTLVEWAKRIPHFSELSLDDQVILLRAGWNELLIASFSHRSITVKDGILLATGLHVHRNSAHSAGVGAIFDRESAHNAEVGAIFDRVLTELVSKMRDMQMDKTELGCLRAIILFNPDAKGLSSPSEVELLREKVYASLEAYCKQRYPDQQGRFAKLLLRLPALRSIGLKCLEHLFFFKLIGDTPIDTFLMEMLEAPHQLT.

The disordered stretch occupies residues 1-34 (MGDSRDSRSPDSSSVSSPPSGQRSPPLAPSAAAM). Residues 1 to 102 (MGDSRDSRSP…HAVSSSDDVK (102 aa)) form a modulating region. Over residues 10 to 25 (PDSSSVSSPPSGQRSP) the composition is skewed to low complexity. The segment at residues 122 to 197 (KRLCAICGDR…MGMKREVVQD (76 aa)) is a DNA-binding region (nuclear receptor). NR C4-type zinc fingers lie at residues 125-145 (CAIC…CEGC) and 161-185 (CRDN…YQKC). The span at 196–216 (QDERQRSVQEERQRNKERDGE) shows a compositional bias: basic and acidic residues. Residues 196-226 (QDERQRSVQEERQRNKERDGEVESSSAANEE) form a disordered region. Positions 198-221 (ERQRSVQEERQRNKERDGEVESSS) are hinge. The region spanning 224-467 (NEEMPVEKIL…TFLMEMLEAP (244 aa)) is the NR LBD domain.

It belongs to the nuclear hormone receptor family. NR2 subfamily. Homodimer. Heterodimer; with a rar molecule. Binds DNA preferentially as a rar/rxr heterodimer. Heterodimerizes with rarga. In terms of tissue distribution, shows uniform expression from the blastula to mid-gastrula stages. At 12 hours post-fertilization (hpf), expressed ubiquitously but more weakly. At 24 hpf, restricted to the ventral diencephalon, pharangeal endoderm and trunk and tail mesoderm; mesoderm expression is in medial cells of each somite along the dorsoventral axis, forming stripes. At 48 hpf, expressed in forebrain, eye, midbrain and anterior hindbrain.

It localises to the nucleus. Receptor for retinoic acid. Retinoic acid receptors bind as heterodimers to their target response elements in response to their ligands, all-trans or 9-cis retinoic acid, and regulate gene expression in various biological processes. The rar/rxr heterodimers bind to the retinoic acid response elements (RARE) composed of tandem 5'-AGGTCA-3' sites known as DR1-DR5. The high affinity ligand for rxrs is 9-cis retinoic acid. This chain is Retinoic acid receptor RXR-beta-A (rxrba), found in Danio rerio (Zebrafish).